The chain runs to 570 residues: AT-rich interactive domain-containing protein 3A (570 aa).

The interval 102–215 (AGVPNSSSGH…LAPQAQSQHH (114 aa)) is disordered. A compositionally biased stretch (acidic residues) spans 120 to 160 (DIDDEDDEDDDPELDRGMDDEERDMDEDDSMNEGGGDEDLE). A Phosphoserine modification is found at S179. An ARID domain is found at 232–324 (DEKRKEFLDD…YLYPYECEKR (93 aa)). Residue S356 is modified to Phosphoserine. The REKLES domain maps to 429-523 (AALEQLREKL…GVLFARKPAI (95 aa)). An important for nuclear localization region spans residues 430-473 (ALEQLREKLESGEPPEKKVMLMAEEQQRIMQHALQQNLFAMATQ). The segment at 475–495 (PMNIKLNNRDDRQETALNLST) is homodimerization. Residues 519-531 (RKPAIGFMPSSQR) are important for cytoplasmic localization. A disordered region spans residues 528 to 570 (SSQRVHHQHSSQGKSNSPGLSSHIQPSSSASSSASSHGPATSP). Phosphoserine is present on residues S542 and S569. The span at 548–570 (SSHIQPSSSASSSASSHGPATSP) shows a compositional bias: low complexity.

Homodimer.

The protein localises to the nucleus. The protein resides in the cytoplasm. Its function is as follows. Transcription factor. This is AT-rich interactive domain-containing protein 3A (arid3a) from Danio rerio (Zebrafish).